We begin with the raw amino-acid sequence, 246 residues long: MTVLMSPDELEAALRAVGAARYHNRHPFHQLLHGGKLDKRQVQAWALNRYCYQAAIPIKDATLIARTDDSELRRIWRQRLVDHDGTQPGEGGIVRWLALAEGLGLDRDMVISERRALPATRFAVRAYVDFVRDRSLLEAVASSLTEMFSPTIISERVSGMLANYDFITRETLAYFNARLDQAPRDADFALDYVKRHARTPEQQQAAIAALTFKCDVLWAQLDALHHAYVSPGLIPPGAFGHDGIWS.

Belongs to the PqqC family.

It carries out the reaction 6-(2-amino-2-carboxyethyl)-7,8-dioxo-1,2,3,4,7,8-hexahydroquinoline-2,4-dicarboxylate + 3 O2 = pyrroloquinoline quinone + 2 H2O2 + 2 H2O + H(+). It functions in the pathway cofactor biosynthesis; pyrroloquinoline quinone biosynthesis. Functionally, ring cyclization and eight-electron oxidation of 3a-(2-amino-2-carboxyethyl)-4,5-dioxo-4,5,6,7,8,9-hexahydroquinoline-7,9-dicarboxylic-acid to PQQ. This Acidiphilium cryptum (strain JF-5) protein is Pyrroloquinoline-quinone synthase.